We begin with the raw amino-acid sequence, 135 residues long: MARPDMGGPKTGGFGGPRSGGFGGGGGGGGGFGGGGFGGGRGGDRGDRGDRDDRGGDEGGGRRGFGRRKVCRFCADKALKVDYKDQGQMKYFLTERGKIIPRRISGNCAKHQREVATAIKRGRMLAILPYTVGQM.

The interval Met1–Phe65 is disordered. Over residues Pro9 to Arg41 the composition is skewed to gly residues. Over residues Gly42–Gly61 the composition is skewed to basic and acidic residues.

This sequence belongs to the bacterial ribosomal protein bS18 family. In terms of assembly, part of the 30S ribosomal subunit. Forms a tight heterodimer with protein bS6.

In terms of biological role, binds as a heterodimer with protein bS6 to the central domain of the 16S rRNA, where it helps stabilize the platform of the 30S subunit. The polypeptide is Small ribosomal subunit protein bS18 (Anaeromyxobacter sp. (strain K)).